A 297-amino-acid polypeptide reads, in one-letter code: N-acetylmuramic acid 6-phosphate etherase (297 aa).

The 164-residue stretch at Ala-55–Lys-218 folds into the SIS domain. The active-site Proton donor is Glu-83. The active site involves Glu-114.

It belongs to the GCKR-like family. MurNAc-6-P etherase subfamily. In terms of assembly, homodimer.

It catalyses the reaction N-acetyl-D-muramate 6-phosphate + H2O = N-acetyl-D-glucosamine 6-phosphate + (R)-lactate. It functions in the pathway amino-sugar metabolism; 1,6-anhydro-N-acetylmuramate degradation. Its pathway is amino-sugar metabolism; N-acetylmuramate degradation. The protein operates within cell wall biogenesis; peptidoglycan recycling. Specifically catalyzes the cleavage of the D-lactyl ether substituent of MurNAc 6-phosphate, producing GlcNAc 6-phosphate and D-lactate. Together with AnmK, is also required for the utilization of anhydro-N-acetylmuramic acid (anhMurNAc) either imported from the medium or derived from its own cell wall murein, and thus plays a role in cell wall recycling. The chain is N-acetylmuramic acid 6-phosphate etherase from Salmonella paratyphi B (strain ATCC BAA-1250 / SPB7).